Consider the following 604-residue polypeptide: Choline transporter-like protein 3 (604 aa).

Residues asparagine 90 and asparagine 103 are each glycosylated (N-linked (GlcNAc...) asparagine). 5 helical membrane-spanning segments follow: residues 165 to 185 (DTILGLCAFVFALSLAMLFTF), 195 to 215 (IIISLVILGLLFVCGVFWWLY), 237 to 257 (LAFAVITTVVTVVLLALIFTL), 286 to 306 (LWTFAILVFFWVLWVAVLLSL), and 330 to 350 (YLWWYHLIGLIWTSEFILTCQ). N-linked (GlcNAc...) asparagine glycosylation is found at asparagine 454 and asparagine 472. 2 helical membrane passes run 485 to 505 (FIIFLGKVLVVCFSVFGGLMA) and 514 to 534 (VWAIPLLLVAFFAYLAAHSFL). The segment covering 581 to 592 (NARSQGHKNSLP) has biased composition (polar residues). The segment at 581-604 (NARSQGHKNSLPNEEGTELRPIVR) is disordered.

This sequence belongs to the CTL (choline transporter-like) family. Expressed in colon, kidney and ileum.

The protein localises to the membrane. The polypeptide is Choline transporter-like protein 3 (Slc44a3) (Rattus norvegicus (Rat)).